The chain runs to 95 residues: Fluoride-specific ion channel FluC 1 (95 aa).

Helical transmembrane passes span 23–43, 49–69, and 70–90; these read LIDA…LMGW, LWGT…LLMF, and DGAY…WLLG. Gly-56 and Thr-59 together coordinate Na(+).

The protein belongs to the fluoride channel Fluc/FEX (TC 1.A.43) family.

It is found in the cell membrane. The catalysed reaction is fluoride(in) = fluoride(out). With respect to regulation, na(+) is not transported, but it plays an essential structural role and its presence is essential for fluoride channel function. Functionally, fluoride-specific ion channel. Important for reducing fluoride concentration in the cell, thus reducing its toxicity. The sequence is that of Fluoride-specific ion channel FluC 1 from Corynebacterium diphtheriae (strain ATCC 700971 / NCTC 13129 / Biotype gravis).